The sequence spans 478 residues: Transposase for insertion sequence element IS231D (478 aa).

Belongs to the transposase 11 family.

Functionally, involved in the transposition of the insertion sequence. The chain is Transposase for insertion sequence element IS231D from Bacillus thuringiensis subsp. finitimus.